Here is a 144-residue protein sequence, read N- to C-terminus: Large ribosomal subunit protein uL15 (144 aa).

Residues 1–52 (MKLHTLKSTPGARVEKHRVGRGHAAGKGKQAGKGQSGQNKRHGHRLGFEGGQ) form a disordered region. Residues 15 to 26 (EKHRVGRGHAAG) are compositionally biased toward basic residues.

The protein belongs to the universal ribosomal protein uL15 family. In terms of assembly, part of the 50S ribosomal subunit.

In terms of biological role, binds to the 23S rRNA. The protein is Large ribosomal subunit protein uL15 of Mycoplasmopsis agalactiae (strain NCTC 10123 / CIP 59.7 / PG2) (Mycoplasma agalactiae).